A 443-amino-acid chain; its full sequence is MYKVRIRGIFATALTKLALEWGFKIVQPTGKILQRFQIEADYSPPDLTVKDHESKTGVVVLGKCEAFESFLQRLGESLDPIVARARAGVKEVFSGKAVGEHEVEGPRGEVFKVPARYVLTPGGTGVFTVVKPPVGPVSGVAAPEIAVEGDYVELNTSGRVTFSEHIPQEDRLRLGILAETRLKQYASIGLRFKSSAKYADEEQIIKEAEVLYRELLQLSHGGPPGAVLRRGNCFAVVLFDRRSKEVLDSARASAVPTVRGHHALRAQGLGKCLDLLDYTGADVYEKAVEFLSRGPVLIYHVKPWGEVVKMKGEALGVKNGVLVVKRPLKPGGVLDGIGVRIERGFYALTCIPRDANYVVHTYYDGSNNVVGTYININTTPEWGRRVIYIDLLVDKTYAGGVEKVLDVDEFEKYKEYFPQRLRNPLQLAPSGRLECTAEGLVVR.

This sequence belongs to the FAU-1 family.

Probable RNase involved in rRNA stability through maturation and/or degradation of precursor rRNAs. Binds to RNA in loop regions with AU-rich sequences. This Pyrobaculum aerophilum (strain ATCC 51768 / DSM 7523 / JCM 9630 / CIP 104966 / NBRC 100827 / IM2) protein is Probable ribonuclease FAU-1.